Reading from the N-terminus, the 1336-residue chain is Coiled-coil and C2 domain-containing protein 2A (1336 aa).

Disordered stretches follow at residues methionine 1–valine 29 and valine 70–isoleucine 97. A compositionally biased stretch (basic residues) spans lysine 8–arginine 23. Residues valine 70–threonine 89 are compositionally biased toward acidic residues. Residues leucine 136–glutamine 156 are a coiled coil. In terms of domain architecture, C2 spans proline 755–isoleucine 915.

In terms of assembly, probable component of the tectonic-like complex (also named MKS complex), composed of B9d1, B9d2, Cc2d2a, Mks1 and tctn. Expressed in the antennae of chordotonal neurons and male germ cells (at protein level).

It localises to the cytoplasm. The protein resides in the cytoskeleton. Its subcellular location is the cilium basal body. The protein localises to the microtubule organizing center. It is found in the centrosome. It localises to the centriole. Probable component of the tectonic-like complex (also named MKS complex), a complex localized at the transition zone of primary cilia. Required for ciliary structure and function. In Drosophila melanogaster (Fruit fly), this protein is Coiled-coil and C2 domain-containing protein 2A.